Consider the following 263-residue polypeptide: Zinc finger protein STAMENLESS 1 (263 aa).

Residues Met-1–Lys-51 form a disordered region. Over residues Thr-25–Ser-40 the composition is skewed to low complexity. A C2H2-type zinc finger spans residues Tyr-58 to His-80.

As to expression, expressed in leaf primordia, inflorescence meristem, rachis branch meristems, floral meristem and floral organ primordia.

The protein localises to the nucleus. Regulates floral organ identity and cell proliferation in the inner floral whorls. Probably specifies the identities of lodicule and stamen through positive regulation of MADS16 expression. May contribute to morphogenesis by suppressing OSH1 expression in the lateral organs. The sequence is that of Zinc finger protein STAMENLESS 1 (SL1) from Oryza sativa subsp. japonica (Rice).